Consider the following 473-residue polypeptide: Bifunctional protein GlmU (473 aa).

Residues M1–R241 form a pyrophosphorylase region. UDP-N-acetyl-alpha-D-glucosamine contacts are provided by residues L13–G16, K27, Q84, and G89–T90. D114 is a Mg(2+) binding site. Residues G152, E167, N182, and N239 each contribute to the UDP-N-acetyl-alpha-D-glucosamine site. Position 239 (N239) interacts with Mg(2+). The tract at residues A242–S262 is linker. Residues G263–K473 are N-acetyltransferase. UDP-N-acetyl-alpha-D-glucosamine is bound by residues R343 and K361. H373 acts as the Proton acceptor in catalysis. 2 residues coordinate UDP-N-acetyl-alpha-D-glucosamine: Y376 and N387. Residues A390, N396–Y397, S415, T433, and R450 contribute to the acetyl-CoA site.

It in the N-terminal section; belongs to the N-acetylglucosamine-1-phosphate uridyltransferase family. This sequence in the C-terminal section; belongs to the transferase hexapeptide repeat family. Homotrimer. The cofactor is Mg(2+).

The protein localises to the cytoplasm. The enzyme catalyses alpha-D-glucosamine 1-phosphate + acetyl-CoA = N-acetyl-alpha-D-glucosamine 1-phosphate + CoA + H(+). The catalysed reaction is N-acetyl-alpha-D-glucosamine 1-phosphate + UTP + H(+) = UDP-N-acetyl-alpha-D-glucosamine + diphosphate. The protein operates within nucleotide-sugar biosynthesis; UDP-N-acetyl-alpha-D-glucosamine biosynthesis; N-acetyl-alpha-D-glucosamine 1-phosphate from alpha-D-glucosamine 6-phosphate (route II): step 2/2. It functions in the pathway nucleotide-sugar biosynthesis; UDP-N-acetyl-alpha-D-glucosamine biosynthesis; UDP-N-acetyl-alpha-D-glucosamine from N-acetyl-alpha-D-glucosamine 1-phosphate: step 1/1. Its pathway is bacterial outer membrane biogenesis; LPS lipid A biosynthesis. Catalyzes the last two sequential reactions in the de novo biosynthetic pathway for UDP-N-acetylglucosamine (UDP-GlcNAc). The C-terminal domain catalyzes the transfer of acetyl group from acetyl coenzyme A to glucosamine-1-phosphate (GlcN-1-P) to produce N-acetylglucosamine-1-phosphate (GlcNAc-1-P), which is converted into UDP-GlcNAc by the transfer of uridine 5-monophosphate (from uridine 5-triphosphate), a reaction catalyzed by the N-terminal domain. This Sorangium cellulosum (strain So ce56) (Polyangium cellulosum (strain So ce56)) protein is Bifunctional protein GlmU.